A 64-amino-acid chain; its full sequence is Large ribosomal subunit protein bL35 (64 aa).

This sequence belongs to the bacterial ribosomal protein bL35 family.

In Streptomyces coelicolor (strain ATCC BAA-471 / A3(2) / M145), this protein is Large ribosomal subunit protein bL35.